Here is a 941-residue protein sequence, read N- to C-terminus: Zinc finger protein 507 (941 aa).

S95 carries the phosphoserine modification. C2H2-type zinc fingers lie at residues 122–144 (YQCS…VKQH) and 152–175 (LMCS…VSEH). Residues 165–177 (QELEAHVVSEHEN) show a composition bias toward basic and acidic residues. The interval 165–198 (QELEAHVVSEHENSASSQARSSPSGQGATERKSE) is disordered. The segment covering 178–192 (SASSQARSSPSGQGA) has biased composition (low complexity). The segment at 237 to 259 (YRCLFCSYTCGQQRMLKTHAWKH) adopts a C2H2-type 3 zinc-finger fold. Position 415 is a phosphoserine (S415). The segment at 455 to 477 (ELSKGLAPDENAPPGRRRTNSES) is disordered. 5 consecutive C2H2-type zinc fingers follow at residues 630–652 (YRCR…LRVH), 658–680 (YQCP…MINH), 686–709 (HQCK…REQH), 746–768 (YRCD…RRVH), and 774–796 (YRCS…MWKH). The interval 823 to 856 (GKSRGKPLLTSSEERTGPTTGSPENLVSSSELTS) is disordered. The segment covering 839 to 856 (GPTTGSPENLVSSSELTS) has biased composition (polar residues). Residues 899–921 (FCCCICGFESTSKESLLDHMKEH) form a C2H2-type 9 zinc finger.

Belongs to the krueppel C2H2-type zinc-finger protein family.

Its subcellular location is the nucleus. In terms of biological role, may be involved in transcriptional regulation. The polypeptide is Zinc finger protein 507 (Znf507) (Mus musculus (Mouse)).